A 112-amino-acid chain; its full sequence is Integration host factor subunit alpha (112 aa).

It belongs to the bacterial histone-like protein family. Heterodimer of an alpha and a beta chain.

Its function is as follows. This protein is one of the two subunits of integration host factor, a specific DNA-binding protein that functions in genetic recombination as well as in transcriptional and translational control. In Allorhizobium ampelinum (strain ATCC BAA-846 / DSM 112012 / S4) (Agrobacterium vitis (strain S4)), this protein is Integration host factor subunit alpha.